The primary structure comprises 352 residues: tRNA (guanine-N(1)-)-methyltransferase (352 aa).

S-adenosyl-L-methionine-binding positions include Gly-109 and 129–134 (IGDYVL).

Belongs to the RNA methyltransferase TrmD family. As to quaternary structure, homodimer.

The protein localises to the cytoplasm. It carries out the reaction guanosine(37) in tRNA + S-adenosyl-L-methionine = N(1)-methylguanosine(37) in tRNA + S-adenosyl-L-homocysteine + H(+). Its function is as follows. Specifically methylates guanosine-37 in various tRNAs. The chain is tRNA (guanine-N(1)-)-methyltransferase from Chlamydia trachomatis serovar L2 (strain ATCC VR-902B / DSM 19102 / 434/Bu).